A 504-amino-acid chain; its full sequence is ATP synthase subunit alpha (504 aa).

170-177 (GDRQTGKT) lines the ATP pocket.

Belongs to the ATPase alpha/beta chains family. In terms of assembly, F-type ATPases have 2 components, CF(1) - the catalytic core - and CF(0) - the membrane proton channel. CF(1) has five subunits: alpha(3), beta(3), gamma(1), delta(1), epsilon(1). CF(0) has four main subunits: a(1), b(1), b'(1) and c(9-12).

The protein resides in the cellular thylakoid membrane. The enzyme catalyses ATP + H2O + 4 H(+)(in) = ADP + phosphate + 5 H(+)(out). Produces ATP from ADP in the presence of a proton gradient across the membrane. The alpha chain is a regulatory subunit. The chain is ATP synthase subunit alpha from Prochlorococcus marinus (strain NATL2A).